Consider the following 66-residue polypeptide: MAKGKEVRVRVILECTSCVRNGVNKESRGISRYITQKNRHNTPSRLELRKFCPYCYKHTLHGEIKK.

This sequence belongs to the bacterial ribosomal protein bL33 family.

It is found in the plastid. The protein resides in the chloroplast. The protein is Large ribosomal subunit protein bL33c of Citrus sinensis (Sweet orange).